An 83-amino-acid chain; its full sequence is UPF0297 protein LEUM_0557 (83 aa).

It belongs to the UPF0297 family.

The protein is UPF0297 protein LEUM_0557 of Leuconostoc mesenteroides subsp. mesenteroides (strain ATCC 8293 / DSM 20343 / BCRC 11652 / CCM 1803 / JCM 6124 / NCDO 523 / NBRC 100496 / NCIMB 8023 / NCTC 12954 / NRRL B-1118 / 37Y).